The primary structure comprises 487 residues: MTTEQKLQLAEIRTMIPEMRRVECIHFVGIGGAGMSGIAEVLLNEGYHISGSDVAENSVTVRLAEKGADIFFGHHASNVEKASVVVVSTAIDQANPEIVAAKENRIPVIRRAEMLAELMRYRHGIAVAGTHGKTTTTALTTQIYSEAGLDPTFVNGGLVKNAGTNARLGSSRFLIAEADESDASFLHLQPMVSIVTNIEADHMDTYGGDFEVLKQTFIDFLHNLPFYGQAVMCIDDDVVRELLPRVSRQVITYGFSDDADVRLINYRQEGQKSFFTVQRKDRTDLDIVLNIPGKHNALNATAAIAVATEEDVEDSAILSALLNFEGAGRRFDQLGEFETGNGHAMLVDDYGHHPTEVDVTIKAARAGWEDKRLVMIFQPHRYSRTRDLYDDFANVLDNVDVLIMLDVYSAGEKPIAGADGRALCRTIRARGKLDPIFVPTIDALPSVLANIIQNNDLVLTQGAGDVGKLAKQLASLELNIQAMKELG.

129–135 (GTHGKTT) contributes to the ATP binding site.

This sequence belongs to the MurCDEF family.

It is found in the cytoplasm. The catalysed reaction is UDP-N-acetyl-alpha-D-muramate + L-alanine + ATP = UDP-N-acetyl-alpha-D-muramoyl-L-alanine + ADP + phosphate + H(+). The protein operates within cell wall biogenesis; peptidoglycan biosynthesis. Functionally, cell wall formation. The polypeptide is UDP-N-acetylmuramate--L-alanine ligase (Aliivibrio salmonicida (strain LFI1238) (Vibrio salmonicida (strain LFI1238))).